The chain runs to 359 residues: NADH-quinone oxidoreductase subunit H (359 aa).

A run of 8 helical transmembrane segments spans residues 16–36 (IWPATVWPVLWALIKIVCVLL), 94–114 (GLFVLGPIMTIMPALAAWAVI), 129–149 (LLFLMAITSMEVYGVIIAGWA), 167–187 (VSYEIAMGFCLVVVLMVSASL), 208–228 (FLSWNWLPLLPIFVVYFISGL), 261–281 (FFLAEYANMWLVAILAVILFL), 296–316 (IPGWIWLGAKTFVVVTMFLWV), and 331–351 (LGWKIFIPVTLVWLVVVGAWM).

Belongs to the complex I subunit 1 family. As to quaternary structure, NDH-1 is composed of 14 different subunits. Subunits NuoA, H, J, K, L, M, N constitute the membrane sector of the complex.

It is found in the cell inner membrane. The enzyme catalyses a quinone + NADH + 5 H(+)(in) = a quinol + NAD(+) + 4 H(+)(out). Functionally, NDH-1 shuttles electrons from NADH, via FMN and iron-sulfur (Fe-S) centers, to quinones in the respiratory chain. The immediate electron acceptor for the enzyme in this species is believed to be ubiquinone. Couples the redox reaction to proton translocation (for every two electrons transferred, four hydrogen ions are translocated across the cytoplasmic membrane), and thus conserves the redox energy in a proton gradient. This subunit may bind ubiquinone. The chain is NADH-quinone oxidoreductase subunit H from Polaromonas sp. (strain JS666 / ATCC BAA-500).